The primary structure comprises 138 residues: ATP synthase epsilon chain (138 aa).

Belongs to the ATPase epsilon chain family. As to quaternary structure, F-type ATPases have 2 components, CF(1) - the catalytic core - and CF(0) - the membrane proton channel. CF(1) has five subunits: alpha(3), beta(3), gamma(1), delta(1), epsilon(1). CF(0) has three main subunits: a, b and c.

Its subcellular location is the cell inner membrane. Produces ATP from ADP in the presence of a proton gradient across the membrane. This chain is ATP synthase epsilon chain, found in Acidovorax ebreus (strain TPSY) (Diaphorobacter sp. (strain TPSY)).